The primary structure comprises 1654 residues: Mediator of RNA polymerase II transcription subunit 12 (1654 aa).

2 disordered regions span residues 52–72 (DLNG…LSGN) and 1481–1530 (SKQT…SFQT). The span at 1515 to 1530 (PLSSARPSSEAASFQT) shows a compositional bias: polar residues.

Belongs to the Mediator complex subunit 12 family. Component of the SRB8-11 complex, which itself associates with the Mediator complex.

The protein resides in the nucleus. Component of the SRB8-11 complex. The SRB8-11 complex is a regulatory module of the Mediator complex which is itself involved in regulation of basal and activated RNA polymerase II-dependent transcription. The SRB8-11 complex may be involved in the transcriptional repression of a subset of genes regulated by Mediator. It may inhibit the association of the Mediator complex with RNA polymerase II to form the holoenzyme complex. The protein is Mediator of RNA polymerase II transcription subunit 12 (SRB8) of Scheffersomyces stipitis (strain ATCC 58785 / CBS 6054 / NBRC 10063 / NRRL Y-11545) (Yeast).